We begin with the raw amino-acid sequence, 237 residues long: DNA repair protein RecO (237 aa).

Belongs to the RecO family.

Functionally, involved in DNA repair and RecF pathway recombination. This chain is DNA repair protein RecO, found in Rickettsia africae (strain ESF-5).